The sequence spans 75 residues: MKTVFLLLIRFYQKWISPALPPTCRFYPTCSNYGLEAIEKHGAFKGGWLTIKRILKCHPFHPGGIDPVPEKKQKD.

Belongs to the UPF0161 family.

It is found in the cell membrane. Functionally, could be involved in insertion of integral membrane proteins into the membrane. This chain is Putative membrane protein insertion efficiency factor 2, found in Bacillus licheniformis (strain ATCC 14580 / DSM 13 / JCM 2505 / CCUG 7422 / NBRC 12200 / NCIMB 9375 / NCTC 10341 / NRRL NRS-1264 / Gibson 46).